Consider the following 185-residue polypeptide: 16S rRNA aminocarboxypropyltransferase (185 aa).

Positions 19, 69, 93, 108, and 112 each coordinate S-adenosyl-L-methionine.

The protein belongs to the TDD superfamily. TSR3 family.

It localises to the cytoplasm. It catalyses the reaction an N(1)-methylpseudouridine in rRNA + S-adenosyl-L-methionine = N(1)-methyl-N(3)-[(3S)-3-amino-3-carboxypropyl]pseudouridine in rRNA + S-methyl-5'-thioadenosine + H(+). Aminocarboxypropyltransferase that catalyzes the aminocarboxypropyl transfer on pseudouridine corresponding to position 914 in M.jannaschii 16S rRNA. It constitutes the last step in biosynthesis of the hypermodified N1-methyl-N3-(3-amino-3-carboxypropyl) pseudouridine (m1acp3-Psi). This is 16S rRNA aminocarboxypropyltransferase from Vulcanisaeta distributa (strain DSM 14429 / JCM 11212 / NBRC 100878 / IC-017).